Consider the following 252-residue polypeptide: Putative pinene synthase (252 aa).

This sequence belongs to the terpene synthase family. Tpsa subfamily.

This chain is Putative pinene synthase, found in Fragaria ananassa (Strawberry).